We begin with the raw amino-acid sequence, 241 residues long: Urease accessory protein UreF (241 aa).

Belongs to the UreF family. In terms of assembly, ureD, UreF and UreG form a complex that acts as a GTP-hydrolysis-dependent molecular chaperone, activating the urease apoprotein by helping to assemble the nickel containing metallocenter of UreC. The UreE protein probably delivers the nickel.

The protein resides in the cytoplasm. In terms of biological role, required for maturation of urease via the functional incorporation of the urease nickel metallocenter. This is Urease accessory protein UreF from Rhodopseudomonas palustris (strain BisB18).